The following is a 164-amino-acid chain: Cell cycle link protein (164 aa).

Residues 9-22 (LPEELKEKIMNEHL) form a binding to host SKP1 protein region. The LXCXE motif, interaction with host RBR motif lies at 111–115 (LYCSE).

It belongs to the nanovirus Clink protein family. As to quaternary structure, interacts with host SKP1. Interacts (via LXCXE domain) with host retinoblastoma-related protein 1 (RBR1). Interacts (via LXCXE domain) with retinoblastoma-related proteins (RBR).

In terms of biological role, interacts with and disrupts the function of host retinoblastoma-related proteins RBR, which are key regulators of the cell cycle. Induces transcriptional activation of E2F-regulated S-phase and G2/M-phase-specific genes. Inactivation of the ability of RBR to arrest the cell cycle leads to the stimulation of viral DNA replication. The sequence is that of Cell cycle link protein (DNA-C) from Trifolium subterraneum (Subterranean clover).